The sequence spans 276 residues: Ribonuclease T2 (276 aa).

A signal peptide spans 1-17 (MGMLALGAMQLAAGAVF). 5 disulfides stabilise this stretch: Cys22-Cys41, Cys30-Cys77, Cys40-Cys143, Cys85-Cys135, and Cys208-Cys242. N-linked (GlcNAc...) asparagine glycosylation is present at Asn32. The active site involves His70. Asn93 carries an N-linked (GlcNAc...) asparagine glycan. Residues Glu128 and His132 contribute to the active site. N-linked (GlcNAc...) asparagine glycosylation occurs at Asn256.

This sequence belongs to the RNase T2 family.

It catalyses the reaction a ribonucleotidyl-ribonucleotide-RNA + H2O = a 3'-end 3'-phospho-ribonucleotide-RNA + a 5'-end dephospho-ribonucleoside-RNA + H(+). In Aspergillus oryzae (strain ATCC 42149 / RIB 40) (Yellow koji mold), this protein is Ribonuclease T2 (rntB).